We begin with the raw amino-acid sequence, 234 residues long: FAS1 domain-containing protein AFUA_8G05360 (234 aa).

The signal sequence occupies residues 1–21; sequence MRRTLFVLFVVAFCFIGSVIA. An FAS1 domain is found at 83 to 231; it reads KPVVSDVLPK…GELWILNSVL (149 aa).

It localises to the vacuole. This is FAS1 domain-containing protein AFUA_8G05360 from Aspergillus fumigatus (strain ATCC MYA-4609 / CBS 101355 / FGSC A1100 / Af293) (Neosartorya fumigata).